Reading from the N-terminus, the 39-residue chain is Photosystem II reaction center protein Y (39 aa).

The helical transmembrane segment at 7–25 (LLIVLLPILAAAGWAVFNI) threads the bilayer.

The protein belongs to the PsbY family. As to quaternary structure, PSII is composed of 1 copy each of membrane proteins PsbA, PsbB, PsbC, PsbD, PsbE, PsbF, PsbH, PsbI, PsbJ, PsbK, PsbL, PsbM, PsbT, PsbX, PsbY, PsbZ, Psb30/Ycf12, peripheral proteins PsbO, CyanoQ (PsbQ), PsbU, PsbV and a large number of cofactors. It forms dimeric complexes.

It is found in the cellular thylakoid membrane. Its function is as follows. Loosely associated component of the core of photosystem II (PSII), it is not always seen in crystals. PSII is a light-driven water plastoquinone oxidoreductase, using light energy to abstract electrons from H(2)O, generating a proton gradient subsequently used for ATP formation. In Trichodesmium erythraeum (strain IMS101), this protein is Photosystem II reaction center protein Y.